A 458-amino-acid polypeptide reads, in one-letter code: MDDVKDKLKGFMKKVNLSSSSGKFKGQGRVLGSSSSSSAPPVNPIQNRFNSSQAPNPTPRPKPNPNPLPEKPLSSSDQKISGSTRNPDHDPVRAPQDGFDPYGAFITSSNRSQNGYSLSMFECPICKNPFTSEEEVSVHVESCLGDTNGDESSFEKDNNDNDKSEMEKLVVVYLSGKPSESSIDVLLRLFKNIVKEPENAKFRKVRMSNAKIKEAIGDVAGGVELLELVGFELKEENDEIWAVMDVPSEEQSILINKVVGYLEKRKTESSGSSAQVMEPVAPKKIDREIRVFFSVSENVASRIEVPDSFYSLSADEIKREADLRRKKIAESQLLIPRSYKEKQAKAARKRYKRSMIRVQFPDGVVLQGVFAPWEPTFALYEFVSSALKEPSLQFELLDPVLVKRRVIPHTPAPGQKPITLEDEELVPSALIRFRPIETDSLVFTGLRNELLEISEPLS.

The interval 1 to 103 (MDDVKDKLKG…APQDGFDPYG (103 aa)) is disordered. Positions 44 to 54 (PIQNRFNSSQA) are enriched in polar residues. The segment covering 56–70 (NPTPRPKPNPNPLPE) has biased composition (pro residues). A compositionally biased stretch (polar residues) spans 74–85 (SSSDQKISGSTR). The C2H2-type; atypical zinc-finger motif lies at 121-143 (FECPICKNPFTSEEEVSVHVESC). The PUB domain maps to 181–248 (SSIDVLLRLF…EIWAVMDVPS (68 aa)). The 85-residue stretch at 349–433 (KRYKRSMIRV…ELVPSALIRF (85 aa)) folds into the UBX domain.

As to quaternary structure, interacts with CDC48A in vitro and co-fractionates with membrane-associated but not soluble CDC48A in vivo.

The protein localises to the membrane. Facilitates the interaction of SYP31 and CDC48A, thereby regulating an CDC48A membrane-associated function. Appears to act as a negative regulator mediating the powdery mildew-plant interaction. This Arabidopsis thaliana (Mouse-ear cress) protein is Plant UBX domain-containing protein 2.